The chain runs to 326 residues: Mitochondrial substrate carrier family protein R (326 aa).

Solcar repeat units follow at residues 9 to 95 (TSPM…LKNN), 101 to 214 (KSSV…FKRI), and 226 to 318 (VIGI…LCDY). The next 6 membrane-spanning stretches (helical) occupy residues 12 to 32 (MVTL…IAPL), 64 to 84 (LAGL…YSAI), 104 to 124 (VQIF…TYPL), 185 to 205 (GIWR…GVGY), 226 to 246 (VIGI…QTAA), and 290 to 310 (LFKG…VAFL).

Belongs to the mitochondrial carrier (TC 2.A.29) family.

The protein localises to the mitochondrion inner membrane. In terms of biological role, mitochondrial solute carriers shuttle metabolites, nucleotides, and cofactors through the mitochondrial inner membrane. May be involved in the accumulation of coenzyme A in the mitochondrial matrix. The protein is Mitochondrial substrate carrier family protein R (mcfR) of Dictyostelium discoideum (Social amoeba).